The following is a 430-amino-acid chain: Adenylosuccinate synthetase (430 aa).

GTP contacts are provided by residues Gly12–Lys18 and Gly40–Thr42. Residue Asp13 is the Proton acceptor of the active site. Residues Asp13 and Gly40 each coordinate Mg(2+). IMP contacts are provided by residues Asp13–Lys16, Asn38–His41, Thr129, Arg143, Gln224, Thr239, and Arg303. The active-site Proton donor is His41. Thr299–Arg305 contacts substrate. GTP-binding positions include Arg305, Lys331–Asp333, and Ser413–Gly415.

Belongs to the adenylosuccinate synthetase family. In terms of assembly, homodimer. The cofactor is Mg(2+).

The protein localises to the cytoplasm. It carries out the reaction IMP + L-aspartate + GTP = N(6)-(1,2-dicarboxyethyl)-AMP + GDP + phosphate + 2 H(+). It participates in purine metabolism; AMP biosynthesis via de novo pathway; AMP from IMP: step 1/2. Functionally, plays an important role in the de novo pathway of purine nucleotide biosynthesis. Catalyzes the first committed step in the biosynthesis of AMP from IMP. This chain is Adenylosuccinate synthetase, found in Ehrlichia ruminantium (strain Welgevonden).